We begin with the raw amino-acid sequence, 46 residues long: uncharacterized protein (46 aa).

This is an uncharacterized protein from Saccharomyces cerevisiae (strain ATCC 204508 / S288c) (Baker's yeast).